A 356-amino-acid chain; its full sequence is Protein RecA (356 aa).

An ATP-binding site is contributed by 67–74 (GPESSGKT).

The protein belongs to the RecA family.

It localises to the cytoplasm. Its function is as follows. Can catalyze the hydrolysis of ATP in the presence of single-stranded DNA, the ATP-dependent uptake of single-stranded DNA by duplex DNA, and the ATP-dependent hybridization of homologous single-stranded DNAs. It interacts with LexA causing its activation and leading to its autocatalytic cleavage. The chain is Protein RecA from Yersinia pseudotuberculosis serotype I (strain IP32953).